A 622-amino-acid chain; its full sequence is Low affinity potassium transport system protein Kup (622 aa).

Transmembrane regions (helical) follow at residues 9–29 (LPAITLAAIGVVYGDIGTSPL), 49–69 (VFGFLSLIFWLLIFVVSIKYL), 103–123 (VIMGLIGGSFFYGEVVITPAI), 137–157 (PQLDTWIVPLSIVVLTLLFMI), 165–185 (VGKLFAPIMLTWFLILAVLGL), 213–233 (VSFIALGAVVLSITGVEALYA), 247–267 (WFTVVLPSLVLNYFGQGALLL), 276–296 (PFFLLAPDWALIPLLILAALA), 337–357 (IYIPFVNWLLYFAVVVVIVSF), 363–383 (LAAAYGIAVTGTMVLTSILST), 396–416 (LVALILVAFLCVDIPLFSANL), and 419–439 (LLSGGWLPLSLGLIMFTIMTT).

It belongs to the HAK/KUP transporter (TC 2.A.72) family.

The protein localises to the cell inner membrane. It carries out the reaction K(+)(in) + H(+)(in) = K(+)(out) + H(+)(out). Responsible for the low-affinity transport of potassium into the cell. Likely operates as a K(+):H(+) symporter. This is Low affinity potassium transport system protein Kup from Salmonella arizonae (strain ATCC BAA-731 / CDC346-86 / RSK2980).